Here is a 398-residue protein sequence, read N- to C-terminus: 1-deoxy-D-xylulose 5-phosphate reductoisomerase (398 aa).

NADPH-binding residues include Thr10, Gly11, Ser12, Ile13, Gly36, Lys37, Asn38, and Asn124. 1-deoxy-D-xylulose 5-phosphate is bound at residue Lys125. Residue Glu126 participates in NADPH binding. Asp150 is a binding site for Mn(2+). 4 residues coordinate 1-deoxy-D-xylulose 5-phosphate: Ser151, Glu152, Ser186, and His209. Residue Glu152 participates in Mn(2+) binding. An NADPH-binding site is contributed by Gly215. Residues Ser222, Asn227, Lys228, and Glu231 each coordinate 1-deoxy-D-xylulose 5-phosphate. Glu231 is a binding site for Mn(2+).

The protein belongs to the DXR family. In terms of assembly, homodimer. The cofactor is Mg(2+). Mn(2+) is required as a cofactor.

The enzyme catalyses 2-C-methyl-D-erythritol 4-phosphate + NADP(+) = 1-deoxy-D-xylulose 5-phosphate + NADPH + H(+). It functions in the pathway isoprenoid biosynthesis; isopentenyl diphosphate biosynthesis via DXP pathway; isopentenyl diphosphate from 1-deoxy-D-xylulose 5-phosphate: step 1/6. Functionally, catalyzes the NADPH-dependent rearrangement and reduction of 1-deoxy-D-xylulose-5-phosphate (DXP) to 2-C-methyl-D-erythritol 4-phosphate (MEP). The protein is 1-deoxy-D-xylulose 5-phosphate reductoisomerase of Shigella flexneri.